The chain runs to 80 residues: Large ribosomal subunit protein bL31 (80 aa).

Zn(2+) is bound by residues cysteine 16, cysteine 18, cysteine 38, and cysteine 41.

Belongs to the bacterial ribosomal protein bL31 family. Type A subfamily. Part of the 50S ribosomal subunit. It depends on Zn(2+) as a cofactor.

Functionally, binds the 23S rRNA. The protein is Large ribosomal subunit protein bL31 of Rhodococcus jostii (strain RHA1).